A 994-amino-acid chain; its full sequence is Sarcoplasmic/endoplasmic reticulum calcium ATPase 1 (994 aa).

Topologically, residues 1 to 48 are cytoplasmic; it reads MENAHAKTAEECLAFFGVNESVGLSGEQVRRALEKYGHNELPAEEGKT. A helical membrane pass occupies residues 49–69; the sequence is IWELVVEQFEDLLVRILLLAA. Over 70 to 89 the chain is Lumenal; it reads CISFVLAWFEEGEETITAFV. A helical membrane pass occupies residues 90-110; it reads EPFVILLILIANAVVGVWQER. Over 111–253 the chain is Cytoplasmic; the sequence is NAENAIEALK…QDKTPLQQKL (143 aa). The helical transmembrane segment at 254–273 threads the bilayer; sequence DEFGEQLSKVISLICVAVWL. At 274–295 the chain is on the lumenal side; that stretch reads INIGHFNDPVHGGSWIRGAIYY. Residues 296–313 form a helical membrane-spanning segment; that stretch reads FKIAVALAVAAIPEGLPA. 4 residues coordinate Ca(2+): V304, A305, I307, and E309. The Cytoplasmic segment spans residues 314–757; that stretch reads VITTCLALGT…EEGRAIYNNM (444 aa). Residue D351 is the 4-aspartylphosphate intermediate of the active site. 2 residues coordinate Mg(2+): D351 and T353. The ATP site is built by T353, E442, R489, K515, R560, T625, G626, D627, R678, and K684. Residue D703 participates in Mg(2+) binding. An ATP-binding site is contributed by N706. A helical membrane pass occupies residues 758–777; the sequence is KQFIRYLISSNVGEVVCIFL. Ca(2+)-binding residues include N768 and E771. Residues 778-787 lie on the Lumenal side of the membrane; the sequence is TAALGLPEAL. Residues 788–808 traverse the membrane as a helical segment; that stretch reads IPVQLLWVNLVTDGLPATALG. An interaction with PLN region spans residues 788–808; the sequence is IPVQLLWVNLVTDGLPATALG. Ca(2+) is bound by residues N796, T799, and D800. Topologically, residues 809–828 are cytoplasmic; sequence FNPPDLDIMDKPPRSPKEPL. The helical transmembrane segment at 829 to 851 threads the bilayer; it reads ISGWLFFRYLAIGGYVGAATVGA. The Lumenal portion of the chain corresponds to 852–897; it reads AAWWFLYAEDGPSLTYHQLTHFMQCTHHNAEFEGVDCDIFESPVPM. A disulfide bridge connects residues C876 and C888. The helical transmembrane segment at 898 to 917 threads the bilayer; sequence TMALSVLVTIEMCNALNSLS. Residue E908 coordinates Ca(2+). Residues 918 to 930 are Cytoplasmic-facing; that stretch reads ENQSLLRMPPWVN. A helical membrane pass occupies residues 931 to 949; that stretch reads IWLVGSICLSMSLHFVILY. The tract at residues 932-943 is interaction with PLN; it reads WLVGSICLSMSL. Residues 950 to 964 are Lumenal-facing; the sequence is VDPLPMIFKLTHLDL. A helical membrane pass occupies residues 965–985; that stretch reads AHWLVVLRISFPVILLDEALK. Over 986-994 the chain is Cytoplasmic; the sequence is FVARNYLEA.

It belongs to the cation transport ATPase (P-type) (TC 3.A.3) family. Type IIA subfamily. In terms of assembly, interacts with sarcolipin (SLN). Interacts with phospholamban (PLN). Interacts with myoregulin (MRLN). Interacts with DWORF. Requires Mg(2+) as cofactor.

It is found in the endoplasmic reticulum membrane. Its subcellular location is the sarcoplasmic reticulum membrane. The catalysed reaction is Ca(2+)(in) + ATP + H2O = Ca(2+)(out) + ADP + phosphate + H(+). Its activity is regulated as follows. Inhibited by sarcolipin (SLN) and myoregulin (MRLN). Also shown to be inhibited by phospholamban (PLN) in vitro. Enhanced by DWORF; DWORF increases activity by displacing sarcolipin (SLN), phospholamban (PLN) and myoregulin (MRLN). Functionally, key regulator of striated muscle performance by acting as the major Ca(2+) ATPase responsible for the reuptake of cytosolic Ca(2+) into the sarcoplasmic reticulum. Catalyzes the hydrolysis of ATP coupled with the translocation of calcium from the cytosol to the sarcoplasmic reticulum lumen. Contributes to calcium sequestration involved in muscular excitation/contraction. The polypeptide is Sarcoplasmic/endoplasmic reticulum calcium ATPase 1 (ATP2A1) (Gallus gallus (Chicken)).